The primary structure comprises 94 residues: Co-chaperonin GroES (94 aa).

Belongs to the GroES chaperonin family. As to quaternary structure, heptamer of 7 subunits arranged in a ring. Interacts with the chaperonin GroEL.

The protein resides in the cytoplasm. In terms of biological role, together with the chaperonin GroEL, plays an essential role in assisting protein folding. The GroEL-GroES system forms a nano-cage that allows encapsulation of the non-native substrate proteins and provides a physical environment optimized to promote and accelerate protein folding. GroES binds to the apical surface of the GroEL ring, thereby capping the opening of the GroEL channel. The protein is Co-chaperonin GroES of Halothermothrix orenii (strain H 168 / OCM 544 / DSM 9562).